The sequence spans 395 residues: Multidrug resistance protein MdtL (395 aa).

12 consecutive transmembrane segments (helical) span residues 4 to 24 (FLLC…MYLV), 42 to 62 (IAFS…GKIA), 69 to 89 (PVAI…SRAS), 93 to 113 (LFLS…VVAF), 131 to 151 (LLNG…HLIM), 158 to 178 (SLFY…LFIL), 217 to 237 (VSVI…VMGF), 247 to 267 (ALTA…LGLF), 271 to 291 (TLML…SLAH), 295 to 315 (VTLF…GVAM), 328 to 350 (VASS…LAAI), and 355 to 377 (AMNM…IFSV).

Belongs to the major facilitator superfamily. DHA1 family. MdtL (TC 2.A.1.2.22) subfamily.

It is found in the cell inner membrane. In Salmonella newport (strain SL254), this protein is Multidrug resistance protein MdtL.